The sequence spans 282 residues: MKLTIISGRSGSGKTTALQALEDQGFYCVDNLPVGMLPTLAKQLSEGDPPIERVAVGIDARNLPAQLLAFDNILHALNEQQVRSEIIYLDADDHTLLTRFSATRRRHPLGTDQRSLADAIGHERELLANIRQRADLVIDSSNHDVHTLRNLMRERVARREATLSLQLESFGFKNGLPTDADLVFDVRVLPNPHWHADLRPFTGKDDCIIEFLSQHQASHDMLKDIGDFVVRWLPAFANSDRSYVTVAIGCTGGRHRSVFITEQLAKNLRAEGIVLQVRHREL.

Residue 8–15 (GRSGSGKT) coordinates ATP. Residue 59-62 (DARN) coordinates GTP.

Belongs to the RapZ-like family.

Its function is as follows. Displays ATPase and GTPase activities. The protein is Nucleotide-binding protein ABO_0549 of Alcanivorax borkumensis (strain ATCC 700651 / DSM 11573 / NCIMB 13689 / SK2).